Here is a 510-residue protein sequence, read N- to C-terminus: Bifunctional purine biosynthesis protein PurH (510 aa).

An MGS-like domain is found at 1–143 (MTKRALISVS…KNHDAVLVLV (143 aa)).

The protein belongs to the PurH family.

The enzyme catalyses (6R)-10-formyltetrahydrofolate + 5-amino-1-(5-phospho-beta-D-ribosyl)imidazole-4-carboxamide = 5-formamido-1-(5-phospho-D-ribosyl)imidazole-4-carboxamide + (6S)-5,6,7,8-tetrahydrofolate. The catalysed reaction is IMP + H2O = 5-formamido-1-(5-phospho-D-ribosyl)imidazole-4-carboxamide. It participates in purine metabolism; IMP biosynthesis via de novo pathway; 5-formamido-1-(5-phospho-D-ribosyl)imidazole-4-carboxamide from 5-amino-1-(5-phospho-D-ribosyl)imidazole-4-carboxamide (10-formyl THF route): step 1/1. Its pathway is purine metabolism; IMP biosynthesis via de novo pathway; IMP from 5-formamido-1-(5-phospho-D-ribosyl)imidazole-4-carboxamide: step 1/1. In Deinococcus radiodurans (strain ATCC 13939 / DSM 20539 / JCM 16871 / CCUG 27074 / LMG 4051 / NBRC 15346 / NCIMB 9279 / VKM B-1422 / R1), this protein is Bifunctional purine biosynthesis protein PurH.